Reading from the N-terminus, the 107-residue chain is Phosphoribosyl-ATP pyrophosphatase (107 aa).

The protein belongs to the PRA-PH family.

Its subcellular location is the cytoplasm. It catalyses the reaction 1-(5-phospho-beta-D-ribosyl)-ATP + H2O = 1-(5-phospho-beta-D-ribosyl)-5'-AMP + diphosphate + H(+). It functions in the pathway amino-acid biosynthesis; L-histidine biosynthesis; L-histidine from 5-phospho-alpha-D-ribose 1-diphosphate: step 2/9. This Bacillus cereus (strain G9842) protein is Phosphoribosyl-ATP pyrophosphatase.